The chain runs to 500 residues: Cytochrome P450 71B35 (500 aa).

A helical transmembrane segment spans residues 1-21 (MAHIWLLPLIFLVCILLAVFN). C439 provides a ligand contact to heme.

The protein belongs to the cytochrome P450 family. Requires heme as cofactor.

The protein resides in the membrane. This is Cytochrome P450 71B35 (CYP71B35) from Arabidopsis thaliana (Mouse-ear cress).